A 370-amino-acid chain; its full sequence is MMMSDLPHDLVEEILSRLPLISLKAMRSTCKTWNVLSKHRSFANKHIGNVTASGKRDLIMIKDCKVYSIGVNLHGIQNNNNIIDLSIKNKGILHLENLDLIFKEIFNVFHCNGLLLLYGSITDDSIRLVVCNPYWGKREWVKRINNFASFDKLAFGYDKSCGCHKILRVFDSYPNRLEIYNLRSNSRMVSSFPLKWDIAFMQDGVSLKGNTYWYAKDRRSEDCYLICFDFTRERFGPRLPLPQPFIDEFLGSLYVVREEKLAVLVKRWRGGKSEIDIWVTNKIEPDEVSWSKFLKVDNTPRFFLTEGYLIYDEEKVVVFFNKEETEGLKSTVHIAYIVGENGYFRRADLREPLYQPLCRLVCSYVPSSVK.

The region spanning 1 to 45 (MMMSDLPHDLVEEILSRLPLISLKAMRSTCKTWNVLSKHRSFANK) is the F-box domain.

This is F-box protein At3g20690 from Arabidopsis thaliana (Mouse-ear cress).